A 484-amino-acid polypeptide reads, in one-letter code: Acid alpha-amylase (484 aa).

An N-linked (GlcNAc...) asparagine glycan is attached at Asn-24. Cysteines 30 and 38 form a disulfide. Residue Trp-83 coordinates substrate. A Ca(2+)-binding site is contributed by Asp-121. Residue His-122 coordinates substrate. An intrachain disulfide couples Cys-150 to Cys-164. The N-linked (GlcNAc...) asparagine glycan is linked to Asn-157. The Ca(2+) site is built by Glu-162 and Asp-175. N-linked (GlcNAc...) asparagine glycosylation occurs at Asn-197. Position 204 (Arg-204) interacts with substrate. Ca(2+) is bound by residues Asp-206, Glu-210, and Glu-230. Asp-206 functions as the Nucleophile in the catalytic mechanism. Substrate is bound at residue 209-210; the sequence is LE. Catalysis depends on Glu-230, which acts as the Proton donor. Residue Gly-234 coordinates substrate. Cys-240 and Cys-283 form a disulfide bridge. Substrate is bound by residues Asp-297 and Arg-344. An intrachain disulfide couples Cys-440 to Cys-475.

It belongs to the glycosyl hydrolase 13 family. As to quaternary structure, monomer. Ca(2+) serves as cofactor.

The protein localises to the secreted. It catalyses the reaction Endohydrolysis of (1-&gt;4)-alpha-D-glucosidic linkages in polysaccharides containing three or more (1-&gt;4)-alpha-linked D-glucose units.. In Aspergillus niger, this protein is Acid alpha-amylase.